The chain runs to 462 residues: Adenylosuccinate lyase (462 aa).

N(6)-(1,2-dicarboxyethyl)-AMP is bound by residues 21 to 22, 87 to 89, and 114 to 115; these read RY, KHD, and TS. The active-site Proton donor/acceptor is histidine 162. Residue glutamine 236 participates in N(6)-(1,2-dicarboxyethyl)-AMP binding. Serine 287 (proton donor/acceptor) is an active-site residue. N(6)-(1,2-dicarboxyethyl)-AMP-binding positions include serine 288, 293 to 295, and 332 to 336; these read KRN and SAERC.

This sequence belongs to the lyase 1 family. Adenylosuccinate lyase subfamily. Homotetramer. Residues from neighboring subunits contribute catalytic and substrate-binding residues to each active site.

The enzyme catalyses N(6)-(1,2-dicarboxyethyl)-AMP = fumarate + AMP. It catalyses the reaction (2S)-2-[5-amino-1-(5-phospho-beta-D-ribosyl)imidazole-4-carboxamido]succinate = 5-amino-1-(5-phospho-beta-D-ribosyl)imidazole-4-carboxamide + fumarate. It functions in the pathway purine metabolism; AMP biosynthesis via de novo pathway; AMP from IMP: step 2/2. The protein operates within purine metabolism; IMP biosynthesis via de novo pathway; 5-amino-1-(5-phospho-D-ribosyl)imidazole-4-carboxamide from 5-amino-1-(5-phospho-D-ribosyl)imidazole-4-carboxylate: step 2/2. In terms of biological role, catalyzes two reactions in de novo purine nucleotide biosynthesis. Catalyzes the breakdown of 5-aminoimidazole- (N-succinylocarboxamide) ribotide (SAICAR or 2-[5-amino-1-(5-phospho-beta-D-ribosyl)imidazole-4-carboxamido]succinate) to 5-aminoimidazole-4-carboxamide ribotide (AICAR or 5-amino-1-(5-phospho-beta-D-ribosyl)imidazole-4-carboxamide) and fumarate, and of adenylosuccinate (ADS or N(6)-(1,2-dicarboxyethyl)-AMP) to adenosine monophosphate (AMP) and fumarate. The chain is Adenylosuccinate lyase (purB) from Methanocaldococcus jannaschii (strain ATCC 43067 / DSM 2661 / JAL-1 / JCM 10045 / NBRC 100440) (Methanococcus jannaschii).